We begin with the raw amino-acid sequence, 54 residues long: Large ribosomal subunit protein bL33C (54 aa).

Belongs to the bacterial ribosomal protein bL33 family.

The protein is Large ribosomal subunit protein bL33C (rpmG3) of Streptomyces coelicolor (strain ATCC BAA-471 / A3(2) / M145).